Reading from the N-terminus, the 287-residue chain is Lectin 10 (287 aa).

Over 1-11 (MALSNLKSNRT) the chain is Cytoplasmic. A helical transmembrane segment spans residues 12–31 (LSSSLITIFIISLFLQYHNI). Over 32–287 (KSQSSWQSRQ…IINWSFESAL (256 aa)) the chain is Extracellular. Asparagine 124, asparagine 147, asparagine 243, and asparagine 280 each carry an N-linked (GlcNAc...) asparagine glycan.

The protein belongs to the leguminous lectin family.

The protein localises to the membrane. Functionally, may be involved in arbuscular mycorrhizal (AM) symbiosis with AM fungi. The polypeptide is Lectin 10 (Medicago truncatula (Barrel medic)).